The following is a 214-amino-acid chain: Ribonuclease T (214 aa).

In terms of domain architecture, Exonuclease spans 20 to 195 (VVVDVETAGF…YDTQQTAELF (176 aa)). Mg(2+)-binding residues include Asp-23, Glu-25, His-182, and Asp-187. The active-site Proton donor/acceptor is the His-182.

It belongs to the RNase T family. As to quaternary structure, homodimer. Requires Mg(2+) as cofactor.

Its function is as follows. Trims short 3' overhangs of a variety of RNA species, leaving a one or two nucleotide 3' overhang. Responsible for the end-turnover of tRNA: specifically removes the terminal AMP residue from uncharged tRNA (tRNA-C-C-A). Also appears to be involved in tRNA biosynthesis. In Vibrio campbellii (strain ATCC BAA-1116), this protein is Ribonuclease T.